A 108-amino-acid polypeptide reads, in one-letter code: UPF0060 membrane protein KPK_2870 (108 aa).

4 helical membrane passes run L6–L26, G29–L49, A61–V81, and Y86–G106.

The protein belongs to the UPF0060 family.

It is found in the cell inner membrane. This is UPF0060 membrane protein KPK_2870 from Klebsiella pneumoniae (strain 342).